The sequence spans 376 residues: Histidinol-phosphate aminotransferase 1 (376 aa).

Position 235 is an N6-(pyridoxal phosphate)lysine (lysine 235).

It belongs to the class-II pyridoxal-phosphate-dependent aminotransferase family. Histidinol-phosphate aminotransferase subfamily. Homodimer. The cofactor is pyridoxal 5'-phosphate.

It carries out the reaction L-histidinol phosphate + 2-oxoglutarate = 3-(imidazol-4-yl)-2-oxopropyl phosphate + L-glutamate. It functions in the pathway amino-acid biosynthesis; L-histidine biosynthesis; L-histidine from 5-phospho-alpha-D-ribose 1-diphosphate: step 7/9. In Cupriavidus pinatubonensis (strain JMP 134 / LMG 1197) (Cupriavidus necator (strain JMP 134)), this protein is Histidinol-phosphate aminotransferase 1.